A 318-amino-acid chain; its full sequence is tRNA U34 carboxymethyltransferase (318 aa).

Carboxy-S-adenosyl-L-methionine contacts are provided by residues Lys-85, Trp-99, Lys-104, Gly-124, 175 to 176 (LD), Met-190, Tyr-194, and Arg-311.

Belongs to the class I-like SAM-binding methyltransferase superfamily. CmoB family. As to quaternary structure, homotetramer.

The enzyme catalyses carboxy-S-adenosyl-L-methionine + 5-hydroxyuridine(34) in tRNA = 5-carboxymethoxyuridine(34) in tRNA + S-adenosyl-L-homocysteine + H(+). Its function is as follows. Catalyzes carboxymethyl transfer from carboxy-S-adenosyl-L-methionine (Cx-SAM) to 5-hydroxyuridine (ho5U) to form 5-carboxymethoxyuridine (cmo5U) at position 34 in tRNAs. In Ruthia magnifica subsp. Calyptogena magnifica, this protein is tRNA U34 carboxymethyltransferase.